A 433-amino-acid polypeptide reads, in one-letter code: Serine/threonine-protein kinase toxin HipA (433 aa).

At S147 the chain carries Phosphoserine; by autocatalysis. ATP is bound by residues 151 to 154, K178, and 220 to 222; these read VQPK and ERF. The Proton acceptor role is filled by D306. Residues 308–311 and 327–328 each bind ATP; these read HGKN and YD. DNA-binding regions lie at residues 380-384 and R429; that span reads RIARR.

This sequence belongs to the HipA Ser/Thr kinase family. As to quaternary structure, monomer. Forms a HipA(2)HipB(2)-DNA complex with cognate antitoxin HipB; has higher affinity for the latter when HipB is prebound to DNA and HipA is phosphorylated. Binds DNA in the ternary complex.

It carries out the reaction L-seryl-[protein] + ATP = O-phospho-L-seryl-[protein] + ADP + H(+). It catalyses the reaction L-threonyl-[protein] + ATP = O-phospho-L-threonyl-[protein] + ADP + H(+). Functionally, toxic component of a type II toxin-antitoxin (TA) system; overexpression in wild-type temporarily inhibits cell growth, overexpression in a hipAB deletion leads to acute growth inhibition. The toxic effect of HipA is neutralized by its cognate antitoxin HipB. In the ternary phosphoserine-HipA-HipB-DNA complex the DNA is bent about 125 degrees; all HipA in the crystallized ternary complex is phosphorylated. In E.coli phosphorylation of HipA is thought to release HipB from the HipA-HipB-DNA complex, suggesting the complex functions differently in the 2 bacteria. Phosphorylates Glu-tRNA-ligase (GltX, on 'Ser-239') in vivo, with HipB probably acts as a corepressor for transcription of the hipBA promoter. This Shewanella oneidensis (strain ATCC 700550 / JCM 31522 / CIP 106686 / LMG 19005 / NCIMB 14063 / MR-1) protein is Serine/threonine-protein kinase toxin HipA.